The sequence spans 248 residues: Regulator of G-protein signaling 7-binding protein A (248 aa).

Residues 1 to 32 (MSSAPNGRKNRPRTAGTIFQIGGKAPSRESER) are disordered. 2 S-palmitoyl cysteine lipidation sites follow: C243 and C244.

The protein belongs to the RGS7BP/RGS9BP family. In terms of processing, palmitoylated. Undergoes rapid palmitoylation turnover. Palmitoylation regulates the cell membrane and nuclear shuttling and the regulation of GPCR signaling. Upon depalmitoylation, it is targeted from the plasma membrane into the nucleus. GPCR signaling inhibits depalmitoylation and promotes localization to the plasma membrane.

It localises to the nucleus. It is found in the cytoplasm. Its subcellular location is the cell membrane. Regulator of G protein-coupled receptor (GPCR) signaling. Regulatory subunit of the R7-Gbeta5 complexes that acts by controlling the subcellular location of the R7-Gbeta5 complexes. When palmitoylated, it targets the R7-Gbeta5 complexes to the plasma membrane, leading to inhibit G protein alpha subunits. When it is unpalmitoylated, the R7-Gbeta5 complexes undergo a nuclear/cytoplasmic shuttling. The chain is Regulator of G-protein signaling 7-binding protein A (rgs7bpa) from Danio rerio (Zebrafish).